The following is a 159-amino-acid chain: Protein-export protein SecB (159 aa).

This sequence belongs to the SecB family. As to quaternary structure, homotetramer, a dimer of dimers. One homotetramer interacts with 1 SecA dimer.

Its subcellular location is the cytoplasm. Its function is as follows. One of the proteins required for the normal export of preproteins out of the cell cytoplasm. It is a molecular chaperone that binds to a subset of precursor proteins, maintaining them in a translocation-competent state. It also specifically binds to its receptor SecA. In Shewanella amazonensis (strain ATCC BAA-1098 / SB2B), this protein is Protein-export protein SecB.